A 464-amino-acid polypeptide reads, in one-letter code: Na(+)/H(+) antiporter NhaA 2 (464 aa).

Helical transmembrane passes span Val-53–Trp-73, Leu-96–Leu-116, Ala-134–Val-154, Gly-165–Ser-185, Phe-195–Tyr-215, Ile-219–Gln-239, Val-257–Val-277, Ile-313–Leu-333, Pro-340–Thr-360, Trp-378–Ile-398, and Phe-412–Leu-432.

It belongs to the NhaA Na(+)/H(+) (TC 2.A.33) antiporter family.

The protein resides in the cell membrane. The enzyme catalyses Na(+)(in) + 2 H(+)(out) = Na(+)(out) + 2 H(+)(in). Na(+)/H(+) antiporter that extrudes sodium in exchange for external protons. The chain is Na(+)/H(+) antiporter NhaA 2 from Mycolicibacterium vanbaalenii (strain DSM 7251 / JCM 13017 / BCRC 16820 / KCTC 9966 / NRRL B-24157 / PYR-1) (Mycobacterium vanbaalenii).